The primary structure comprises 369 residues: Dof zinc finger protein DOF2.5 (369 aa).

The Dof-type zinc-finger motif lies at 80-134 (LNCPRCNSTNTKFCYYNNYSLTQPRYFCKGCRRYWTEGGSLRNVPVGGSSRKNKR). Residues Cys82, Cys85, Cys107, and Cys110 each contribute to the Zn(2+) site. Disordered regions lie at residues 120-149 (LRNVPVGGSSRKNKRSSSSSSSNILQTIPS), 203-224 (EGNGNITHQQQPSSSSSVYGSS), 284-304 (TDHQGLGHNSNNRSEALHSDH), and 322-369 (SSSI…GSSW). Residues 214-224 (PSSSSSVYGSS) are compositionally biased toward low complexity. The segment covering 284–297 (TDHQGLGHNSNNRS) has biased composition (polar residues). Over residues 342–362 (NNNNNNNSSPNNGYWSGMFST) the composition is skewed to low complexity.

Expressed in the vascular system of the mother plant, but not present in the seed and embryo. In maturing siliques, found all through the funiculus connecting the placenta to the ovule, but not in the ovule.

It localises to the nucleus. Transcription factor specifically involved in the maternal control of seed germination. Regulates transcription by binding to a 5'-AA[AG]G-3' consensus core sequence. May ensure the activation of a component that would trigger germination as a consequence of red light perception. The sequence is that of Dof zinc finger protein DOF2.5 (DOF2.5) from Arabidopsis thaliana (Mouse-ear cress).